We begin with the raw amino-acid sequence, 184 residues long: Probable RNA 2'-phosphotransferase (184 aa).

Belongs to the KptA/TPT1 family.

In terms of biological role, removes the 2'-phosphate from RNA via an intermediate in which the phosphate is ADP-ribosylated by NAD followed by a presumed transesterification to release the RNA and generate ADP-ribose 1''-2''-cyclic phosphate (APPR&gt;P). May function as an ADP-ribosylase. The chain is Probable RNA 2'-phosphotransferase from Escherichia coli O8 (strain IAI1).